The primary structure comprises 173 residues: Transcriptional regulator ERG homolog (173 aa).

Residues 1–84 constitute a DNA-binding region (ETS); the sequence is SGQIQLWQFL…HGKRYAYKFD (84 aa).

The protein belongs to the ETS family.

The protein resides in the nucleus. Functionally, acts as a transcriptional activator. In Lytechinus variegatus (Green sea urchin), this protein is Transcriptional regulator ERG homolog (ERG).